The sequence spans 179 residues: Ribosome maturation factor RimP (179 aa).

Belongs to the RimP family.

The protein localises to the cytoplasm. Its function is as follows. Required for maturation of 30S ribosomal subunits. In Chlorobium chlorochromatii (strain CaD3), this protein is Ribosome maturation factor RimP.